The chain runs to 362 residues: Putative gustatory receptor 89a (362 aa).

The Cytoplasmic portion of the chain corresponds to 1–38 (MLRFPHVCGLCLLLKYWQILALAPFRTSEPMVARCQRW). Residues 39–59 (MTLIAVFRWLLLTSMAPFVLW) traverse the membrane as a helical segment. Residues 60–74 (KSAAMYEATNVRHSM) are Extracellular-facing. Residues 75 to 95 (VFKTIALATMTGDVCISLALL) traverse the membrane as a helical segment. The Cytoplasmic portion of the chain corresponds to 96-126 (GNHLWNRRELANLVNDLARLHRRRRLSWWST). Residues 127–147 (LFLWLKLLLSLYDLLCSVPFL) traverse the membrane as a helical segment. Residues 148-166 (KGAGGRLPWSQLVAYGVQL) are Extracellular-facing. A helical membrane pass occupies residues 167-187 (YFQHVASVYGNGIFGGILLML). The Cytoplasmic portion of the chain corresponds to 188–223 (ECYNQLEREEPTNLARLLQKEYSWLRLIQRFVKLFQ). A helical transmembrane segment spans residues 224 to 244 (LGIFLLVLGSFVNIMVNIYAF). At 245-255 (MSYYVSLHGVP) the chain is on the extracellular side. The helical transmembrane segment at 256 to 276 (LTISNNCLVLAIQLYAVILAA) threads the bilayer. Over 277 to 333 (HLCQVRSAKLRKKCLQLEYVPEGLTQEQAMASTPFPVLTPTGNVKFRILGVFILDNS) the chain is Cytoplasmic. The helical transmembrane segment at 334-354 (FWLFLVSYAMNFIVVILQTSF) threads the bilayer. Over 355-362 (EHINHGEI) the chain is Extracellular.

Belongs to the insect chemoreceptor superfamily. Gustatory receptor (GR) family. Gr77a subfamily.

The protein localises to the cell membrane. In terms of biological role, probable gustatory receptor which mediates acceptance or avoidance behavior, depending on its substrates. The sequence is that of Putative gustatory receptor 89a (Gr89a) from Drosophila melanogaster (Fruit fly).